The sequence spans 197 residues: uncharacterized protein (197 aa).

Belongs to the methyltransferase superfamily.

This is an uncharacterized protein from Mycobacterium bovis (strain ATCC BAA-935 / AF2122/97).